Here is a 210-residue protein sequence, read N- to C-terminus: Na(+)-translocating NADH-quinone reductase subunit D (210 aa).

6 consecutive transmembrane segments (helical) span residues 14-34 (PIIS…ALAV), 42-62 (LVMT…ISMI), 72-92 (IIVQ…VLQA), 103-123 (VFVG…AYAM), 131-151 (FMDG…VGFV), and 178-198 (NGLL…IWII).

This sequence belongs to the NqrDE/RnfAE family. In terms of assembly, composed of six subunits; NqrA, NqrB, NqrC, NqrD, NqrE and NqrF.

Its subcellular location is the cell inner membrane. It catalyses the reaction a ubiquinone + n Na(+)(in) + NADH + H(+) = a ubiquinol + n Na(+)(out) + NAD(+). In terms of biological role, NQR complex catalyzes the reduction of ubiquinone-1 to ubiquinol by two successive reactions, coupled with the transport of Na(+) ions from the cytoplasm to the periplasm. NqrA to NqrE are probably involved in the second step, the conversion of ubisemiquinone to ubiquinol. The chain is Na(+)-translocating NADH-quinone reductase subunit D from Shewanella loihica (strain ATCC BAA-1088 / PV-4).